Consider the following 193-residue polypeptide: Probable DNA-directed RNA polymerase subunit delta (193 aa).

The HTH HARE-type domain maps to 14–81; the sequence is LALVEIATAI…GNNEWGLRAW (68 aa). 2 stretches are compositionally biased toward acidic residues: residues 119–174 and 182–193; these read DDDV…DDNL and DLDDLSDGDIEK. A disordered region spans residues 119–193; that stretch reads DDDVIDYNDD…DDLSDGDIEK (75 aa).

The protein belongs to the RpoE family. RNAP is composed of a core of 2 alpha, a beta and a beta' subunits. The core is associated with a delta subunit and one of several sigma factors.

Participates in both the initiation and recycling phases of transcription. In the presence of the delta subunit, RNAP displays an increased specificity of transcription, a decreased affinity for nucleic acids, and an increased efficiency of RNA synthesis because of enhanced recycling. The polypeptide is Probable DNA-directed RNA polymerase subunit delta (Leuconostoc citreum (strain KM20)).